The primary structure comprises 424 residues: Putative histone deacetylase complex subunit cti6 (424 aa).

Disordered stretches follow at residues methionine 1–threonine 49, serine 117–serine 155, lysine 170–threonine 341, and alanine 381–arginine 405. The segment at valine 48–glutamate 103 adopts a PHD-type zinc-finger fold. Positions glutamate 127 to threonine 137 are enriched in low complexity. Serine 187 is modified (phosphoserine). The segment covering aspartate 241–aspartate 256 has biased composition (acidic residues). Residues glutamate 257–serine 266 are compositionally biased toward basic and acidic residues. The segment covering glutamine 272 to arginine 287 has biased composition (low complexity). Positions arginine 294–aspartate 303 are enriched in basic and acidic residues. Basic residues predominate over residues serine 313–lysine 324. Over residues serine 392–arginine 405 the composition is skewed to basic and acidic residues.

The protein resides in the cytoplasm. Its subcellular location is the nucleus. In terms of biological role, could be a component of the RPD3C(L) histone deacetylase complex (HDAC). The protein is Putative histone deacetylase complex subunit cti6 (cti6) of Schizosaccharomyces pombe (strain 972 / ATCC 24843) (Fission yeast).